The chain runs to 202 residues: uncharacterized protein (202 aa).

Disordered regions lie at residues 1-32 and 46-95; these read MRPE…ASLG and PSSV…PSYT. Positions 47–79 are enriched in low complexity; it reads SSVSLSSSSSRRSMPSLGSSRSSSLPSTGSLRS.

This is an uncharacterized protein from Equus caballus (Horse).